We begin with the raw amino-acid sequence, 189 residues long: Peptidyl-tRNA hydrolase (189 aa).

Tyrosine 16 contacts tRNA. The Proton acceptor role is filled by histidine 21. The tRNA site is built by phenylalanine 67, asparagine 69, and asparagine 115.

This sequence belongs to the PTH family. In terms of assembly, monomer.

Its subcellular location is the cytoplasm. It catalyses the reaction an N-acyl-L-alpha-aminoacyl-tRNA + H2O = an N-acyl-L-amino acid + a tRNA + H(+). Functionally, hydrolyzes ribosome-free peptidyl-tRNAs (with 1 or more amino acids incorporated), which drop off the ribosome during protein synthesis, or as a result of ribosome stalling. Its function is as follows. Catalyzes the release of premature peptidyl moieties from peptidyl-tRNA molecules trapped in stalled 50S ribosomal subunits, and thus maintains levels of free tRNAs and 50S ribosomes. The protein is Peptidyl-tRNA hydrolase of Legionella pneumophila (strain Corby).